Reading from the N-terminus, the 501-residue chain is Vitamin D 25-hydroxylase (501 aa).

Alanine 250 contributes to the substrate binding site. Cysteine 448 contacts heme.

It belongs to the cytochrome P450 family. In terms of assembly, homodimer. Requires heme as cofactor. Highly expressed in the liver and testis.

It localises to the endoplasmic reticulum membrane. It is found in the microsome membrane. The enzyme catalyses calciol + reduced [NADPH--hemoprotein reductase] + O2 = calcidiol + oxidized [NADPH--hemoprotein reductase] + H2O + H(+). It catalyses the reaction vitamin D2 + reduced [NADPH--hemoprotein reductase] + O2 = 25-hydroxyvitamin D2 + oxidized [NADPH--hemoprotein reductase] + H2O + H(+). The catalysed reaction is 1alpha-hydroxyvitamin D2 + reduced [NADPH--hemoprotein reductase] + O2 = 1alpha,25-dihydroxyvitamin D2 + oxidized [NADPH--hemoprotein reductase] + H2O + H(+). It carries out the reaction alfacalcidol + reduced [NADPH--hemoprotein reductase] + O2 = calcitriol + oxidized [NADPH--hemoprotein reductase] + H2O + H(+). Its pathway is hormone biosynthesis; vitamin D biosynthesis. In terms of biological role, a cytochrome P450 monooxygenase involved in activation of vitamin D precursors. Catalyzes hydroxylation at C-25 of both forms of vitamin D, vitamin D(2) and D(3) (calciol). Can metabolize vitamin D analogs/prodrugs 1alpha-hydroxyvitamin D(2) (doxercalciferol) and 1alpha-hydroxyvitamin D(3) (alfacalcidol) forming 25-hydroxy derivatives. Mechanistically, uses molecular oxygen inserting one oxygen atom into a substrate, and reducing the second into a water molecule, with two electrons provided by NADPH via cytochrome P450 reductase (CPR; NADPH-ferrihemoprotein reductase). The chain is Vitamin D 25-hydroxylase (Cyp2r1) from Mus musculus (Mouse).